A 326-amino-acid polypeptide reads, in one-letter code: MFISISAGIVTFLLTLVGIPAFIQFYRKAQITGQQMHEDVKQHQAKAGTPTMGGLVFLIASVLVAFFFALFSNQLSNNVGMILFILVLYGLIGFLDDFLKVFRKINEGLNPKQKLALQLLGGVIFYLFYERGGDILSVFGYPVHLGFFYIFFALFWLVGFSNAVNLTDGVDGLASISVVISLSAYGVIAYVQGQMDILLVILAMIGGLLGFFIFNHKPAKVFMGDVGSLALGGMLAAISMALHQEWTLLIIGIVYVFETTSVMMQVSYFKLTGGKRIFRMTPVHHHFELGGLSGKGNPWSEWKVDFFFWGVGLLASLLTLAILYLM.

Helical transmembrane passes span 3–23, 51–71, 79–99, 115–135, 138–158, 169–189, 195–215, 221–243, and 306–326; these read ISISAGIVTFLLTLVGIPAFI, TMGGLVFLIASVLVAFFFALF, VGMILFILVLYGLIGFLDDFL, LALQLLGGVIFYLFYERGGDI, VFGYPVHLGFFYIFFALFWLV, GVDGLASISVVISLSAYGVIA, MDILLVILAMIGGLLGFFIFN, VFMGDVGSLALGGMLAAISMALH, and FFFWGVGLLASLLTLAILYLM.

It belongs to the glycosyltransferase 4 family. MraY subfamily. Requires Mg(2+) as cofactor.

The protein resides in the cell membrane. It catalyses the reaction UDP-N-acetyl-alpha-D-muramoyl-L-alanyl-gamma-D-glutamyl-L-lysyl-D-alanyl-D-alanine + di-trans,octa-cis-undecaprenyl phosphate = Mur2Ac(oyl-L-Ala-gamma-D-Glu-L-Lys-D-Ala-D-Ala)-di-trans,octa-cis-undecaprenyl diphosphate + UMP. The protein operates within cell wall biogenesis; peptidoglycan biosynthesis. Its function is as follows. Catalyzes the initial step of the lipid cycle reactions in the biosynthesis of the cell wall peptidoglycan: transfers peptidoglycan precursor phospho-MurNAc-pentapeptide from UDP-MurNAc-pentapeptide onto the lipid carrier undecaprenyl phosphate, yielding undecaprenyl-pyrophosphoryl-MurNAc-pentapeptide, known as lipid I. In Streptococcus pneumoniae serotype 19F (strain G54), this protein is Phospho-N-acetylmuramoyl-pentapeptide-transferase.